We begin with the raw amino-acid sequence, 277 residues long: Probable septum site-determining protein MinC (277 aa).

The interval 137–164 (ATTGNAPAEPAPAEPAAPAAAPQPPAVP) is disordered. Residues 145–164 (EPAPAEPAAPAAAPQPPAVP) are compositionally biased toward pro residues.

It belongs to the MinC family. As to quaternary structure, interacts with MinD and FtsZ.

Its function is as follows. Cell division inhibitor that blocks the formation of polar Z ring septums. Rapidly oscillates between the poles of the cell to destabilize FtsZ filaments that have formed before they mature into polar Z rings. Prevents FtsZ polymerization. This Bordetella petrii (strain ATCC BAA-461 / DSM 12804 / CCUG 43448) protein is Probable septum site-determining protein MinC.